We begin with the raw amino-acid sequence, 1216 residues long: MARGRIRSKLRLSHIYTFGCLRPSADEGQDPHPIQGPGFSRTVYCNQPHMHKKKPLKYRSNYVSTTRYNLITFFPKCLYEQFHRAANFYFLVAAILSVFPLSPFNKWSMIAPLVFVVGLSMLKEALEDWSRFMQDVKINASKVYVHKSDGEFRRRKWKKISVGDIVKVEKDGFFPADLLLLSSSYEDGICYVETMNLDGETNLKVKRSLEVTLSLDDYDSFKDFTGIIRCEDPNPSLYTFVGNLEYERQIFPLDPSQILLRDSKLRNTPYVYGVVVFTGHDTKVMQNSTKSPSKRSRIEKTMDYIIYTLLVLLILISCISSSGFAWETKFHMPKWWYLRPEEPENLTNPSNPVYAGFVHLITALLLYGYLIPISLYVSIEVVKVLQASFINKDLHMYDSESGVPAHARTSNLNEELGQVDTILSDKTGTLTCNQMDFLKCSIAGTSYGVRSSEVEVAAAQQMAVDLDEHGEVSSRTSTPRAQARDIEVESSITPRIPIKGFGFEDIRLMDGNWLREPHTDDILLFFRILAICHTAIPELNEETGKYTYEAESPDEASFLTAASEFGFVFFKRTQSSVYVHERLSHSGQTIEREYKVLNLLDFTSKRKRMSVVVRDEEGQILLLCKGADSIIFERLAKNGKVYLGPTTKHLNEYGEAGLRTLALSYRKLDEEEYSAWNAEFHKAKTSIGSDRDELLERISDMIEKDLILVGATAVEDKLQKGVPQCIDKLAQAGLKLWVLTGDKMETAINIGYSCSLLRQGMKQICITVVNSEGASQDAKAVKDNILNQITKAVQMVKLEKDPHAAFALIIDGKTLTYALEDEMKYQFLALAVDCASVICCRVSPKQKALVTRLVKEGTGKITLAIGDGANDVGMIQEADIGVGISGVEGMQAVMASDFSIAQFRFLERLLVVHGHWCYKRIAQMICYFFYKNIAFGLTLFYFEAFTGFSGQSVYNDYYLLLFNVVLTSLPVIALGVFEQDVSSEICLQFPALYQQGKKNLFFDWYRILGWMGNGVYSSLVIFFLNIGIIYEQAFRVSGQTADMDAVGTTMFTCIIWAVNVQIALTVSHFTWIQHVLIWGSIGLWYLFVALYGMMPPSLSGNIYRILVEILAPAPIYWIATFLVTVTTVLPYFAHISFQRFLHPLDHHIIQEIKYYKRDVEDRRMWTRERTKAREKTKIGFTARVDAKIRHLRSKLNKKQSNMSQFSTQDTMSPRSV.

Topologically, residues 1-74 are cytoplasmic; sequence MARGRIRSKL…TTRYNLITFF (74 aa). The helical transmembrane segment at 75–96 threads the bilayer; sequence PKCLYEQFHRAANFYFLVAAIL. Topologically, residues 97-100 are extracellular; that stretch reads SVFP. The helical transmembrane segment at 101-123 threads the bilayer; it reads LSPFNKWSMIAPLVFVVGLSMLK. Residues 124–305 are Cytoplasmic-facing; sequence EALEDWSRFM…SRIEKTMDYI (182 aa). The helical transmembrane segment at 306–327 threads the bilayer; that stretch reads IYTLLVLLILISCISSSGFAWE. At 328-359 the chain is on the extracellular side; the sequence is TKFHMPKWWYLRPEEPENLTNPSNPVYAGFVH. Residues 360-377 form a helical membrane-spanning segment; it reads LITALLLYGYLIPISLYV. The Cytoplasmic portion of the chain corresponds to 378-922; sequence SIEVVKVLQA…HGHWCYKRIA (545 aa). Aspartate 425 serves as the catalytic 4-aspartylphosphate intermediate. Residue lysine 605 forms a Glycyl lysine isopeptide (Lys-Gly) (interchain with G-Cter in ubiquitin) linkage. Positions 867 and 871 each coordinate Mg(2+). Residues 923-942 traverse the membrane as a helical segment; that stretch reads QMICYFFYKNIAFGLTLFYF. The Extracellular portion of the chain corresponds to 943–956; it reads EAFTGFSGQSVYND. The chain crosses the membrane as a helical span at residues 957–976; the sequence is YYLLLFNVVLTSLPVIALGV. Topologically, residues 977-1006 are cytoplasmic; that stretch reads FEQDVSSEICLQFPALYQQGKKNLFFDWYR. A helical transmembrane segment spans residues 1007-1029; it reads ILGWMGNGVYSSLVIFFLNIGII. Over 1030–1042 the chain is Extracellular; it reads YEQAFRVSGQTAD. The helical transmembrane segment at 1043–1065 threads the bilayer; that stretch reads MDAVGTTMFTCIIWAVNVQIALT. The Cytoplasmic portion of the chain corresponds to 1066 to 1071; that stretch reads VSHFTW. The chain crosses the membrane as a helical span at residues 1072-1092; the sequence is IQHVLIWGSIGLWYLFVALYG. The Extracellular segment spans residues 1093-1109; sequence MMPPSLSGNIYRILVEI. A helical transmembrane segment spans residues 1110 to 1134; that stretch reads LAPAPIYWIATFLVTVTTVLPYFAH. The Cytoplasmic portion of the chain corresponds to 1135-1216; sequence ISFQRFLHPL…TQDTMSPRSV (82 aa). The segment at 1195–1216 is disordered; that stretch reads LNKKQSNMSQFSTQDTMSPRSV. Positions 1198–1216 are enriched in polar residues; it reads KQSNMSQFSTQDTMSPRSV.

It belongs to the cation transport ATPase (P-type) (TC 3.A.3) family. Type IV subfamily.

It localises to the membrane. It carries out the reaction ATP + H2O + phospholipidSide 1 = ADP + phosphate + phospholipidSide 2.. Functionally, involved in transport of phospholipids. This chain is Probable phospholipid-transporting ATPase 4, found in Arabidopsis thaliana (Mouse-ear cress).